Consider the following 127-residue polypeptide: Large ribosomal subunit protein uL24B (127 aa).

The protein belongs to the universal ribosomal protein uL24 family. In terms of assembly, component of the large ribosomal subunit (LSU). Mature yeast ribosomes consist of a small (40S) and a large (60S) subunit. The 40S small subunit contains 1 molecule of ribosomal RNA (18S rRNA) and 33 different proteins (encoded by 57 genes). The large 60S subunit contains 3 rRNA molecules (25S, 5.8S and 5S rRNA) and 46 different proteins (encoded by 81 genes).

Its subcellular location is the cytoplasm. Functionally, component of the ribosome, a large ribonucleoprotein complex responsible for the synthesis of proteins in the cell. The small ribosomal subunit (SSU) binds messenger RNAs (mRNAs) and translates the encoded message by selecting cognate aminoacyl-transfer RNA (tRNA) molecules. The large subunit (LSU) contains the ribosomal catalytic site termed the peptidyl transferase center (PTC), which catalyzes the formation of peptide bonds, thereby polymerizing the amino acids delivered by tRNAs into a polypeptide chain. The nascent polypeptides leave the ribosome through a tunnel in the LSU and interact with protein factors that function in enzymatic processing, targeting, and the membrane insertion of nascent chains at the exit of the ribosomal tunnel. This chain is Large ribosomal subunit protein uL24B, found in Saccharomyces cerevisiae (strain ATCC 204508 / S288c) (Baker's yeast).